A 338-amino-acid polypeptide reads, in one-letter code: Taste receptor type 2 member 39 (338 aa).

The Extracellular segment spans residues 1 to 30; that stretch reads MLGRCFPPDTKEKQQLRMTKLCDPAESELS. Residues 31 to 51 form a helical membrane-spanning segment; sequence PFLITLILAVLLAEYLIGIIA. The Cytoplasmic segment spans residues 52-74; it reads NGFIMAIHAAEWVQNKAVSTSGR. The helical transmembrane segment at 75–95 threads the bilayer; sequence ILVFLSVSRIALQSLMMLEIT. At 96–116 the chain is on the extracellular side; the sequence is ISSTSLSFYSEDAVYYAFKIS. Residues 117–137 form a helical membrane-spanning segment; that stretch reads FIFLNFCSLWFAAWLSFFYFV. At 138–156 the chain is on the cytoplasmic side; that stretch reads KIANFSYPLFLKLRWRITG. The chain crosses the membrane as a helical span at residues 157 to 177; that stretch reads LIPWLLWLSVFISFSHSMFCI. Topologically, residues 178 to 205 are extracellular; the sequence is NIXTVYCNNSFPIHSSNSTKKTYLSEIN. Asn185 and Asn194 each carry an N-linked (GlcNAc...) asparagine glycan. The helical transmembrane segment at 206 to 226 threads the bilayer; sequence VVGLAFFFNLGIVTPLIMFIL. Topologically, residues 227–262 are cytoplasmic; that stretch reads TATLLILSLKRHTLHMGSNATGSNDPSMEAHMGAIK. Residues 263-283 traverse the membrane as a helical segment; the sequence is ATSYFLILYIFNAVALFIYLS. The Extracellular portion of the chain corresponds to 284-291; sequence NMFDINSL. The chain crosses the membrane as a helical span at residues 292–312; it reads WNNLCQIIMAAYPASHSILLI. Topologically, residues 313-338 are cytoplasmic; that stretch reads QDNPGLRRAWKRLQLRLHLYPKEWTL.

The protein belongs to the G-protein coupled receptor T2R family.

It is found in the membrane. Receptor that may play a role in the perception of bitterness and is gustducin-linked. May play a role in sensing the chemical composition of the gastrointestinal content. The activity of this receptor may stimulate alpha gustducin, mediate PLC-beta-2 activation and lead to the gating of TRPM5. The sequence is that of Taste receptor type 2 member 39 (TAS2R39) from Gorilla gorilla gorilla (Western lowland gorilla).